A 238-amino-acid polypeptide reads, in one-letter code: Ribonuclease PH (238 aa).

Phosphate contacts are provided by residues Arg86 and 124-126 (GTR).

It belongs to the RNase PH family. As to quaternary structure, homohexameric ring arranged as a trimer of dimers.

The enzyme catalyses tRNA(n+1) + phosphate = tRNA(n) + a ribonucleoside 5'-diphosphate. Functionally, phosphorolytic 3'-5' exoribonuclease that plays an important role in tRNA 3'-end maturation. Removes nucleotide residues following the 3'-CCA terminus of tRNAs; can also add nucleotides to the ends of RNA molecules by using nucleoside diphosphates as substrates, but this may not be physiologically important. Probably plays a role in initiation of 16S rRNA degradation (leading to ribosome degradation) during starvation. This Phenylobacterium zucineum (strain HLK1) protein is Ribonuclease PH.